The sequence spans 216 residues: Protein-L-isoaspartate O-methyltransferase (216 aa).

Ser-64 is an active-site residue.

This sequence belongs to the methyltransferase superfamily. L-isoaspartyl/D-aspartyl protein methyltransferase family.

The protein localises to the cytoplasm. It catalyses the reaction [protein]-L-isoaspartate + S-adenosyl-L-methionine = [protein]-L-isoaspartate alpha-methyl ester + S-adenosyl-L-homocysteine. Its function is as follows. Catalyzes the methyl esterification of L-isoaspartyl residues in peptides and proteins that result from spontaneous decomposition of normal L-aspartyl and L-asparaginyl residues. It plays a role in the repair and/or degradation of damaged proteins. The sequence is that of Protein-L-isoaspartate O-methyltransferase from Paracoccus denitrificans (strain Pd 1222).